Here is a 606-residue protein sequence, read N- to C-terminus: Dihydroxy-acid dehydratase ilvC, mitochondrial (606 aa).

C84 lines the [2Fe-2S] cluster pocket. D116 is a Mg(2+) binding site. C157 is a binding site for [2Fe-2S] cluster. A Mg(2+)-binding site is contributed by D158. Residue C232 participates in [2Fe-2S] cluster binding. Residue E485 coordinates Mg(2+). S511 serves as the catalytic Proton acceptor.

Belongs to the IlvD/Edd family. [2Fe-2S] cluster serves as cofactor. Mg(2+) is required as a cofactor.

It is found in the mitochondrion. The enzyme catalyses (2R)-2,3-dihydroxy-3-methylbutanoate = 3-methyl-2-oxobutanoate + H2O. It catalyses the reaction (2R,3R)-2,3-dihydroxy-3-methylpentanoate = (S)-3-methyl-2-oxopentanoate + H2O. The protein operates within amino-acid biosynthesis; L-isoleucine biosynthesis; L-isoleucine from 2-oxobutanoate: step 3/4. Its pathway is amino-acid biosynthesis; L-valine biosynthesis; L-valine from pyruvate: step 3/4. Its activity is regulated as follows. DHAD activity is inhibited in dose-dependent manner by 2-hydroxy-3-methylbutyric acid with an IC(50) of about 8 mM. Its function is as follows. Dihydroxyacid dehydratase that catalyzes the third step in the common pathway leading to biosynthesis of branched-chain amino acids. Catalyzes the dehydration of (2R,3R)-2,3-dihydroxy-3-methylpentanoate (2,3-dihydroxy-3-methylvalerate) into 2-oxo-3-methylpentanoate (2-oxo-3-methylvalerate) and of (2R)-2,3-dihydroxy-3-methylbutanoate (2,3-dihydroxyisovalerate) into 2-oxo-3-methylbutanoate (2-oxoisovalerate), the penultimate precursor to L-isoleucine and L-valine, respectively. IlvC and the branched-chain amino acid biosynthesis are crucial for virulence and may be a potential target to develop antifungal agents. This Aspergillus fumigatus (strain ATCC MYA-4609 / CBS 101355 / FGSC A1100 / Af293) (Neosartorya fumigata) protein is Dihydroxy-acid dehydratase ilvC, mitochondrial.